A 20-amino-acid polypeptide reads, in one-letter code: Small ribosomal subunit protein bS20 (20 aa).

Belongs to the bacterial ribosomal protein bS20 family.

Its function is as follows. Binds directly to 16S ribosomal RNA. This is Small ribosomal subunit protein bS20 (rpsT) from Brevundimonas diminuta (Pseudomonas diminuta).